A 345-amino-acid chain; its full sequence is Methylthioribose-1-phosphate isomerase (345 aa).

Substrate contacts are provided by residues 47–49, Arg-90, and Gln-199; that span reads RGA. The Proton donor role is filled by Asp-240. A substrate-binding site is contributed by 250–251; it reads NK.

This sequence belongs to the eIF-2B alpha/beta/delta subunits family. MtnA subfamily.

The enzyme catalyses 5-(methylsulfanyl)-alpha-D-ribose 1-phosphate = 5-(methylsulfanyl)-D-ribulose 1-phosphate. The protein operates within amino-acid biosynthesis; L-methionine biosynthesis via salvage pathway; L-methionine from S-methyl-5-thio-alpha-D-ribose 1-phosphate: step 1/6. Catalyzes the interconversion of methylthioribose-1-phosphate (MTR-1-P) into methylthioribulose-1-phosphate (MTRu-1-P). The protein is Methylthioribose-1-phosphate isomerase of Crocosphaera subtropica (strain ATCC 51142 / BH68) (Cyanothece sp. (strain ATCC 51142)).